The primary structure comprises 294 residues: NAD kinase (294 aa).

The Proton acceptor role is filled by Asp74. NAD(+) is bound by residues 74–75, 148–149, His159, Arg176, Asp178, 189–194, and Gln249; these read DG, NE, and TAYSLS.

The protein belongs to the NAD kinase family. Requires a divalent metal cation as cofactor.

The protein localises to the cytoplasm. It catalyses the reaction NAD(+) + ATP = ADP + NADP(+) + H(+). Its function is as follows. Involved in the regulation of the intracellular balance of NAD and NADP, and is a key enzyme in the biosynthesis of NADP. Catalyzes specifically the phosphorylation on 2'-hydroxyl of the adenosine moiety of NAD to yield NADP. This chain is NAD kinase, found in Vibrio parahaemolyticus serotype O3:K6 (strain RIMD 2210633).